Consider the following 295-residue polypeptide: UDP-N-acetylenolpyruvoylglucosamine reductase (295 aa).

The 164-residue stretch at 26-189 (VGGRADVLFK…VEAEFKGVNS (164 aa)) folds into the FAD-binding PCMH-type domain. R169 is a catalytic residue. C218 serves as the catalytic Proton donor. Residue E288 is part of the active site.

The protein belongs to the MurB family. The cofactor is FAD.

It is found in the cytoplasm. The catalysed reaction is UDP-N-acetyl-alpha-D-muramate + NADP(+) = UDP-N-acetyl-3-O-(1-carboxyvinyl)-alpha-D-glucosamine + NADPH + H(+). It participates in cell wall biogenesis; peptidoglycan biosynthesis. In terms of biological role, cell wall formation. The chain is UDP-N-acetylenolpyruvoylglucosamine reductase from Wolbachia pipientis wMel.